A 320-amino-acid polypeptide reads, in one-letter code: Putative HTH-type transcriptional regulatory protein VNG_2112C (320 aa).

Residues 132–189 form the HTH cro/C1-type domain; sequence LADRREDERLSLGQLASELGVSRRTVSKYEDGMNASIEVAMRLEDLFGGELTAPVDVM. Positions 143–162 form a DNA-binding region, H-T-H motif; the sequence is LGQLASELGVSRRTVSKYED.

The sequence is that of Putative HTH-type transcriptional regulatory protein VNG_2112C from Halobacterium salinarum (strain ATCC 700922 / JCM 11081 / NRC-1) (Halobacterium halobium).